Reading from the N-terminus, the 397-residue chain is Chorismate synthase (397 aa).

Arginine 40 and arginine 46 together coordinate NADP(+). FMN contacts are provided by residues 129–131 (RSS), 257–258 (QA), glycine 302, 317–321 (KPISS), and arginine 343.

The protein belongs to the chorismate synthase family. As to quaternary structure, homotetramer. Requires FMNH2 as cofactor.

It catalyses the reaction 5-O-(1-carboxyvinyl)-3-phosphoshikimate = chorismate + phosphate. The protein operates within metabolic intermediate biosynthesis; chorismate biosynthesis; chorismate from D-erythrose 4-phosphate and phosphoenolpyruvate: step 7/7. Its function is as follows. Catalyzes the anti-1,4-elimination of the C-3 phosphate and the C-6 proR hydrogen from 5-enolpyruvylshikimate-3-phosphate (EPSP) to yield chorismate, which is the branch point compound that serves as the starting substrate for the three terminal pathways of aromatic amino acid biosynthesis. This reaction introduces a second double bond into the aromatic ring system. The polypeptide is Chorismate synthase (Chlorobium limicola (strain DSM 245 / NBRC 103803 / 6330)).